We begin with the raw amino-acid sequence, 438 residues long: V-type ATP synthase beta chain (438 aa).

It belongs to the ATPase alpha/beta chains family.

Its function is as follows. Produces ATP from ADP in the presence of a proton gradient across the membrane. The V-type beta chain is a regulatory subunit. This chain is V-type ATP synthase beta chain, found in Chlamydia abortus (strain DSM 27085 / S26/3) (Chlamydophila abortus).